Reading from the N-terminus, the 37-residue chain is MPNWLKKQMQKAFLEKDNYQIKLLNQCWYFYRKKHCS.

As to quaternary structure, can form a complex with SpoIVA and ClpX.

It localises to the forespore. Functionally, ensures proper spore envelope assembly. Represses premature cortex assembly until coat assembly successfully initiates. Also participates in a quality-control pathway that selectively removes defective sporulating cells through regulated cell death. Acts as an adaptator that delivers SpoIVA to the ClpXP proteolytic machinery for degradation, specifically in cells that improperly assemble the spore envelope. This chain is Cortex morphogenetic protein A, found in Bacillus subtilis (strain 168).